The chain runs to 118 residues: Small ribosomal subunit protein uS13 (118 aa).

Residues 95 to 118 (LPVRGQRTRTNARTRKGPKKLINK) form a disordered region.

Belongs to the universal ribosomal protein uS13 family. In terms of assembly, part of the 30S ribosomal subunit. Forms a loose heterodimer with protein S19. Forms two bridges to the 50S subunit in the 70S ribosome.

Functionally, located at the top of the head of the 30S subunit, it contacts several helices of the 16S rRNA. In the 70S ribosome it contacts the 23S rRNA (bridge B1a) and protein L5 of the 50S subunit (bridge B1b), connecting the 2 subunits; these bridges are implicated in subunit movement. Contacts the tRNAs in the A and P-sites. In Blochmanniella floridana, this protein is Small ribosomal subunit protein uS13.